The sequence spans 135 residues: Protein PsiE homolog (135 aa).

4 helical membrane-spanning segments follow: residues 20-40 (VGLI…TIHL), 54-74 (YMLI…ALIV), 82-102 (HFPL…LIIV), and 107-127 (PIDT…LYLA).

This sequence belongs to the PsiE family.

It localises to the cell inner membrane. In Yersinia pestis (strain Pestoides F), this protein is Protein PsiE homolog.